The chain runs to 196 residues: Chloroplastic ATP-dependent Clp protease proteolytic subunit 1 (196 aa).

S101 (nucleophile) is an active-site residue. The active site involves H126.

It belongs to the peptidase S14 family. In terms of assembly, component of the chloroplastic Clp protease core complex which consist of at least 16 proteins: CLPP4 (3 copies), CLPP5 (3 copies), CLPR4 (2 copies), ClpP1 (1 copy), CLPP6 (1 copy), CLPR2 (1 copy), CLPT1 (1 copy), CLPT2 (1 copy) and 3 copies of CLPP3 and/or CLPR1 and/or CLPR3. The core complex is organized in two heptameric rings, one containing CLPP3,4,5,6 in a 1:2:3:1 ratio and the other CLPP1 and CLPR1,2,3,4 in a 3:1:1:1:1 ratio. In terms of tissue distribution, mostly expressed in leaves. Also detected in stems, and to a lower extent, in roots (at protein level).

It localises to the plastid. It is found in the chloroplast stroma. The enzyme catalyses Hydrolysis of proteins to small peptides in the presence of ATP and magnesium. alpha-casein is the usual test substrate. In the absence of ATP, only oligopeptides shorter than five residues are hydrolyzed (such as succinyl-Leu-Tyr-|-NHMec, and Leu-Tyr-Leu-|-Tyr-Trp, in which cleavage of the -Tyr-|-Leu- and -Tyr-|-Trp bonds also occurs).. Its function is as follows. Cleaves peptides in various proteins in a process that requires ATP hydrolysis. Has a chymotrypsin-like activity. Plays a major role in the degradation of misfolded proteins. The sequence is that of Chloroplastic ATP-dependent Clp protease proteolytic subunit 1 from Arabidopsis thaliana (Mouse-ear cress).